The sequence spans 503 residues: Mitogen-activated protein kinase kinae mkk2 (503 aa).

Residues 1–130 are disordered; it reads MSSSPVPLLR…ASGPASASSS (130 aa). A compositionally biased stretch (pro residues) spans 53 to 66; it reads APQPQRPSTRPAPP. Over residues 100-115 the composition is skewed to polar residues; it reads TGLNESTGHSRSSSFT. Positions 121 to 130 are enriched in low complexity; the sequence is ASGPASASSS. Residues 211-481 form the Protein kinase domain; it reads IIELGSLGEG…PWRMLEHPWM (271 aa). ATP is bound by residues 217–225 and Lys-240; that span reads LGEGAGGAV. Asp-338 acts as the Proton acceptor in catalysis.

It belongs to the protein kinase superfamily. STE Ser/Thr protein kinase family. MAP kinase kinase subfamily.

It carries out the reaction L-seryl-[protein] + ATP = O-phospho-L-seryl-[protein] + ADP + H(+). The enzyme catalyses L-threonyl-[protein] + ATP = O-phospho-L-threonyl-[protein] + ADP + H(+). Its function is as follows. Mitogen-activated kinase kinase (MAPKK), part of the cell wall integrity (CWI) signaling pathway composed by three protein kinases bck1, mkk2 and mpkA and responsible for the maintaining of cell-wall integrity balance. The CWI pathway also regulates the oxidative stress response, as well as the production of some secondary metabolites including pyomelanin. This Aspergillus fumigatus (strain CBS 144.89 / FGSC A1163 / CEA10) (Neosartorya fumigata) protein is Mitogen-activated protein kinase kinae mkk2.